A 93-amino-acid chain; its full sequence is uncharacterized protein (93 aa).

This is an uncharacterized protein from Treponema pallidum (strain Nichols).